We begin with the raw amino-acid sequence, 52 residues long: Large ribosomal subunit protein bL32c (52 aa).

The protein belongs to the bacterial ribosomal protein bL32 family.

It localises to the plastid. The protein localises to the chloroplast. The chain is Large ribosomal subunit protein bL32c from Olimarabidopsis pumila (Dwarf rocket).